The primary structure comprises 459 residues: MKHSGFQAKRLIQLALPVLIAQVTQTMMGFIDTVMAGRVSAVDMAAVAVGTSLWLPAILFVQGLLMAFTPLFAHHNGANNQKAIQPLAFQGAYLALIGGLGVMVFLASAPLVLSHMNLEPQLYNLTIGYIDGILWGAPAFVLYQVLRGCSEGISYTLPTMVIGFVGLAVNIPANYIFIYGHFGIPAMGGAGCGIATALVFWAMLIAMAIYMQFHKKFAALAPFSQFHRPDFATMKKMTKLGLPIAMALFFEVSLFAIIALLLAPLGATVVASHQIALNFSAIVFMLPLSIGIAVSIRIGYYLGRDRADISAVVAKVGLLLALSLALSTAILTVLFRFQIAELYNSDPEVVVLAGSLMLMAALYQLSDSVQVVAAGALRGYKDTRSAFYITLFSYWGIGMSLGYTLAYTDFIVPAMGAHGFWTGLIAGLTSAALLFFIRLRYIQKHRVHLSLIEGDSVHH.

A run of 12 helical transmembrane segments spans residues 12 to 31 (IQLALPVLIAQVTQTMMGFI), 46 to 68 (AVAVGTSLWLPAILFVQGLLMAF), 89 to 111 (FQGAYLALIGGLGVMVFLASAPL), 121 to 143 (QLYNLTIGYIDGILWGAPAFVLY), 155 to 177 (YTLPTMVIGFVGLAVNIPANYIF), 187 to 209 (MGGAGCGIATALVFWAMLIAMAI), 244 to 266 (IAMALFFEVSLFAIIALLLAPLG), 281 to 303 (AIVFMLPLSIGIAVSIRIGYYLG), 316 to 335 (VGLLLALSLALSTAILTVLF), 350 to 372 (VVLAGSLMLMAALYQLSDSVQVV), 385 to 407 (SAFYITLFSYWGIGMSLGYTLAY), and 417 to 439 (AHGFWTGLIAGLTSAALLFFIRL).

This sequence belongs to the multi antimicrobial extrusion (MATE) (TC 2.A.66.1) family.

Its subcellular location is the cell inner membrane. Its function is as follows. Multidrug efflux pump. In Shewanella oneidensis (strain ATCC 700550 / JCM 31522 / CIP 106686 / LMG 19005 / NCIMB 14063 / MR-1), this protein is Probable multidrug resistance protein NorM (norM).